The primary structure comprises 88 residues: Small ribosomal subunit protein uS15c (88 aa).

It belongs to the universal ribosomal protein uS15 family. In terms of assembly, part of the 30S ribosomal subunit.

Its subcellular location is the plastid. It is found in the chloroplast. This is Small ribosomal subunit protein uS15c (rps15) from Crucihimalaya wallichii (Rock-cress).